A 546-amino-acid polypeptide reads, in one-letter code: Probable protein kinase UbiB (546 aa).

In terms of domain architecture, Protein kinase spans 124 to 502 (DFDIQPLASA…HVRQSQSRYL (379 aa)). ATP contacts are provided by residues 130-138 (LASASIAQV) and lysine 153. The active-site Proton acceptor is aspartate 288. The next 2 membrane-spanning stretches (helical) occupy residues 501-521 (YLLG…VNRP) and 522-542 (EWGL…LVGW).

Belongs to the ABC1 family. UbiB subfamily.

The protein localises to the cell inner membrane. It functions in the pathway cofactor biosynthesis; ubiquinone biosynthesis [regulation]. Its function is as follows. Is probably a protein kinase regulator of UbiI activity which is involved in aerobic coenzyme Q (ubiquinone) biosynthesis. In Salmonella agona (strain SL483), this protein is Probable protein kinase UbiB.